The following is a 151-amino-acid chain: Transcriptional regulator MraZ (151 aa).

SpoVT-AbrB domains lie at 5–52 and 81–124; these read ANAI…PLDE and AVDL…DEDA.

The protein belongs to the MraZ family. As to quaternary structure, forms oligomers.

It localises to the cytoplasm. The protein localises to the nucleoid. The sequence is that of Transcriptional regulator MraZ from Pseudomonas fluorescens (strain Pf0-1).